The following is a 232-amino-acid chain: Ubiquinone biosynthesis O-methyltransferase (232 aa).

Residues R36, G55, D76, and M120 each coordinate S-adenosyl-L-methionine.

Belongs to the methyltransferase superfamily. UbiG/COQ3 family.

The catalysed reaction is a 3-demethylubiquinol + S-adenosyl-L-methionine = a ubiquinol + S-adenosyl-L-homocysteine + H(+). It catalyses the reaction a 3-(all-trans-polyprenyl)benzene-1,2-diol + S-adenosyl-L-methionine = a 2-methoxy-6-(all-trans-polyprenyl)phenol + S-adenosyl-L-homocysteine + H(+). The protein operates within cofactor biosynthesis; ubiquinone biosynthesis. Its function is as follows. O-methyltransferase that catalyzes the 2 O-methylation steps in the ubiquinone biosynthetic pathway. The polypeptide is Ubiquinone biosynthesis O-methyltransferase (Burkholderia thailandensis (strain ATCC 700388 / DSM 13276 / CCUG 48851 / CIP 106301 / E264)).